We begin with the raw amino-acid sequence, 70 residues long: Protein SlyX homolog (70 aa).

It belongs to the SlyX family.

The polypeptide is Protein SlyX homolog (Shewanella pealeana (strain ATCC 700345 / ANG-SQ1)).